Consider the following 197-residue polypeptide: Dephospho-CoA kinase (197 aa).

Residues 2–197 enclose the DPCK domain; it reads IIGLTGGIGS…HTKYMELLNE (196 aa). Position 10 to 15 (10 to 15) interacts with ATP; it reads GSGKSA.

This sequence belongs to the CoaE family.

It is found in the cytoplasm. It catalyses the reaction 3'-dephospho-CoA + ATP = ADP + CoA + H(+). It functions in the pathway cofactor biosynthesis; coenzyme A biosynthesis; CoA from (R)-pantothenate: step 5/5. Catalyzes the phosphorylation of the 3'-hydroxyl group of dephosphocoenzyme A to form coenzyme A. The sequence is that of Dephospho-CoA kinase from Gamma-proteobacterium EBAC31A08.